A 560-amino-acid polypeptide reads, in one-letter code: Triacylglyceride transporter MSMEG_3069/MSMEI_2992 (560 aa).

14 helical membrane-spanning segments follow: residues 16–36 (LAVLLGALDTYVVITIIVDIM), 48–68 (QVTPIITGYLLGYIAAMPLLG), 78–98 (MLIQVGLAGFAVGSVVTALSS), 108–128 (IIQGSASGALLPVTLALAADL), 143–163 (AAQELGAVLGPMYGIALVWLF), 168–188 (AVFWVNVPLAVIAMVMIHFSL), 200–220 (VDVIGGVLLAIALGLTVVGLY), 229–249 (VLPSWGLPVLAGALVAAVAFF), 269–289 (PFLAALAASLCAGAALMVTLV), 307–327 (AFLLLRFLIALPIGALIGGWL), 336–356 (VVLIGLLIAAGGFVLISHWSV), 368–388 (FTLPVLDTDLAIVGLGLGLVI), 411–431 (VVVARMIGMLIGIAALGAWGF), and 477–497 (IFLSAAVVCVIGALLGLLISG). Residues 362–371 (RHNLGLFTLP) are beta-hairpin. Positions 519–560 (IDPYDAGDADDAPTEMLDLPTQVLSAPPSDPGDERPGRHRAP) are disordered.

This sequence belongs to the major facilitator superfamily. P55 (TC 2.A.1.3.34) family.

The protein localises to the cell inner membrane. Resistance to ethidium bromide is inhibited by reserpine. Its function is as follows. In association with lipoprotein LprG transports triacyglycerides (TAG) across the inner cell membrane into the periplasm; TAG probably regulates lipid metabolism and growth regulation and plays a structural role in the outer membrane. TAG (and maybe other lipids) enters the central cavity of the P55 transporter from within the cell inner membrane via clefts on the cytoplasmic face of P55 between TM5-TM8 and TM2-TM11. From there the lipid is probably transferred to the hydrophobic cavity of LprG. Confers resistance to ethidium bromide, possibly acting as an efflux pump, requires LprG lipoprotein for normal function. Export of ethidium bromide can be complemented by the equivalent operon from M.tuberculosis (lprG-Rv1410c). Involved in drug susceptibilty, its expression alone partially complements the antibiotic susceptibilty of a double lprG-mfs deletion. Probably does not function as a bona fide drug efflux pump, but instead plays a role in outer membrane biogenesis. Probably required with LprG for normal surface localization of lipoarabinomannan (LAM). The polypeptide is Triacylglyceride transporter MSMEG_3069/MSMEI_2992 (Mycolicibacterium smegmatis (strain ATCC 700084 / mc(2)155) (Mycobacterium smegmatis)).